The following is a 257-amino-acid chain: Large ribosomal subunit protein uL3 (257 aa).

The segment at 232 to 257 (LKAPKKQKTKVETNQVNPKIEEEKTK) is disordered.

The protein belongs to the universal ribosomal protein uL3 family. As to quaternary structure, part of the 50S ribosomal subunit. Forms a cluster with proteins L14 and L19.

Its function is as follows. One of the primary rRNA binding proteins, it binds directly near the 3'-end of the 23S rRNA, where it nucleates assembly of the 50S subunit. The chain is Large ribosomal subunit protein uL3 from Mycoplasma genitalium (strain ATCC 33530 / DSM 19775 / NCTC 10195 / G37) (Mycoplasmoides genitalium).